A 353-amino-acid chain; its full sequence is UPF0283 membrane protein YPTS_2342 (353 aa).

The next 3 helical transmembrane spans lie at 71-91, 101-121, and 214-234; these read MVTA…VQWV, IALG…GSVV, and ESAL…FIAW.

It belongs to the UPF0283 family.

It is found in the cell inner membrane. This is UPF0283 membrane protein YPTS_2342 from Yersinia pseudotuberculosis serotype IB (strain PB1/+).